Reading from the N-terminus, the 272-residue chain is Cell division protein FtsQ (272 aa).

At 1–20 the chain is on the cytoplasmic side; sequence MSSYAPREIPLDIRLMQGTS. A helical membrane pass occupies residues 21 to 40; it reads RALFWLVALGCLFVAGHWLM. The Periplasmic segment spans residues 41–272; it reads QRNWWDIRAV…KTPQPAGRKD (232 aa). One can recognise a POTRA domain in the interval 45–114; it reads WDIRAVRLQG…MQLAVTLQAQ (70 aa).

The protein belongs to the FtsQ/DivIB family. FtsQ subfamily. Part of a complex composed of FtsB, FtsL and FtsQ.

The protein localises to the cell inner membrane. Functionally, essential cell division protein. May link together the upstream cell division proteins, which are predominantly cytoplasmic, with the downstream cell division proteins, which are predominantly periplasmic. May control correct divisome assembly. In Thiomonas arsenitoxydans (strain DSM 22701 / CIP 110005 / 3As), this protein is Cell division protein FtsQ.